The sequence spans 370 residues: NSFL1 cofactor p47 (370 aa).

The segment at 54-73 (SQATPSSVSRGTAPSDNRVT) is disordered. Serine 74, serine 102, and serine 114 each carry phosphoserine. 2 disordered regions span residues 80–116 (HDQD…RSPN) and 137–157 (VTKS…GYRL). The Nuclear localization signal signature appears at 109 to 115 (PPRKRSP). Serine 140 is subject to Phosphoserine; by CDK1. At tyrosine 167 the chain carries Phosphotyrosine. Positions 172–175 (RRRH) match the Nuclear localization signal motif. 3 positions are modified to phosphoserine: serine 176, serine 192, and serine 272. The 66-residue stretch at 179–244 (DVHVVLKLWK…MEDHRDEDFV (66 aa)) folds into the SEP domain. A disordered region spans residues 272 to 292 (SPAQQAENEAKASSSISIDES). Positions 291 to 368 (ESQPTTNIQI…NLLNAVIVQR (78 aa)) constitute a UBX domain.

In terms of assembly, part of a ternary complex containing STX5A, NSFL1C and VCP. NSFL1C forms a homotrimer that binds to one end of a VCP homohexamer. The complex binds to membranes enriched in phosphatidylethanolamine-containing lipids and promotes Golgi membrane fusion. Interaction with VCIP135 leads to dissociation of the complex via ATP hydrolysis by VCP. Binds ubiquitin and mono-ubiquitinated proteins via its N-terminal UBA-like domain when bound to VCP. Phosphorylated during mitosis. Phosphorylation inhibits interaction with Golgi membranes and is required for the fragmentation of the Golgi stacks during mitosis.

The protein localises to the nucleus. It localises to the golgi apparatus. The protein resides in the golgi stack. It is found in the chromosome. Its subcellular location is the cytoplasm. The protein localises to the cytoskeleton. It localises to the microtubule organizing center. The protein resides in the centrosome. In terms of biological role, reduces the ATPase activity of VCP. Necessary for the fragmentation of Golgi stacks during mitosis and for VCP-mediated reassembly of Golgi stacks after mitosis. May play a role in VCP-mediated formation of transitional endoplasmic reticulum (tER). Inhibits the activity of CTSL (in vitro). Together with UBXN2B/p37, regulates the centrosomal levels of kinase AURKA/Aurora A during mitotic progression by promoting AURKA removal from centrosomes in prophase. Also, regulates spindle orientation during mitosis. This is NSFL1 cofactor p47 (NSFL1C) from Bos taurus (Bovine).